A 53-amino-acid polypeptide reads, in one-letter code: MLHYAIVFFVIAIIAAVFGFTGIAAGAAEIAKILFYIFLVVFVVTLLLGVFRT.

Helical transmembrane passes span 5-25 (AIVF…GIAA) and 30-50 (IAKI…LLGV).

Belongs to the UPF0391 family.

Its subcellular location is the cell membrane. The polypeptide is UPF0391 membrane protein Bxeno_A2958 (Paraburkholderia xenovorans (strain LB400)).